The chain runs to 406 residues: Acetylornithine aminotransferase (406 aa).

Pyridoxal 5'-phosphate-binding positions include 108-109 (GA) and F141. Residue R144 participates in N(2)-acetyl-L-ornithine binding. 226–229 (DEVQ) contacts pyridoxal 5'-phosphate. An N6-(pyridoxal phosphate)lysine modification is found at K255. A N(2)-acetyl-L-ornithine-binding site is contributed by T283. Position 284 (T284) interacts with pyridoxal 5'-phosphate.

It belongs to the class-III pyridoxal-phosphate-dependent aminotransferase family. ArgD subfamily. Homodimer. The cofactor is pyridoxal 5'-phosphate.

The protein resides in the cytoplasm. It carries out the reaction N(2)-acetyl-L-ornithine + 2-oxoglutarate = N-acetyl-L-glutamate 5-semialdehyde + L-glutamate. Its pathway is amino-acid biosynthesis; L-arginine biosynthesis; N(2)-acetyl-L-ornithine from L-glutamate: step 4/4. The protein is Acetylornithine aminotransferase of Pseudomonas putida (strain ATCC 47054 / DSM 6125 / CFBP 8728 / NCIMB 11950 / KT2440).